Here is a 375-residue protein sequence, read N- to C-terminus: SAP-like protein BP-73 (375 aa).

Disordered stretches follow at residues 46 to 113 (PNNH…VPGE), 130 to 233 (RARG…VKFQ), and 257 to 315 (TLEN…PSLQ). Residues 59–70 (HQKGGSARRKSK) show a composition bias toward basic residues. Over residues 76 to 86 (DDSENIDEFDT) the composition is skewed to acidic residues. Polar residues predominate over residues 88 to 109 (IMSSKNGPPISLTSNSRPQATS). Composition is skewed to basic and acidic residues over residues 134 to 152 (KGKE…ERGS) and 163 to 186 (HSVD…KRSN). A compositionally biased stretch (polar residues) spans 187 to 197 (ESGNKQNSSIF). The span at 295 to 311 (DEPDASDTDEPSGEYDE) shows a compositional bias: acidic residues. The tract at residues 338–375 (DLSTLKVTELRELAKSRGIKGYSKMKKNDLVELLSNMA) is interaction with WAXY.

In terms of assembly, binds to the DNA in the promoter region of WAXY containing the sequence 5'-ACGCACGCTAACGTGA-3'. Expressed in tissues with high cell division activities: in root tips, stem node, panicle, flower and immature seed. Weakly expressed in root and leaf.

May regulate cell proliferation and plant growth. The chain is SAP-like protein BP-73 (BP-73) from Oryza sativa subsp. japonica (Rice).